We begin with the raw amino-acid sequence, 246 residues long: Small ribosomal subunit protein uS3A (246 aa).

The 72-residue stretch at 21–92 (LNEFLTRELA…SVELYAEKVA (72 aa)) folds into the KH type-2 domain. The disordered stretch occupies residues 215–246 (DEIVPTTPISEQKAAKPDQPQPPAMPQPVATA).

The protein belongs to the universal ribosomal protein uS3 family.

The protein resides in the cytoplasm. The protein localises to the nucleus. Its subcellular location is the nucleolus. It is found in the mitochondrion inner membrane. It localises to the cytoskeleton. The protein resides in the spindle. The enzyme catalyses 2'-deoxyribonucleotide-(2'-deoxyribose 5'-phosphate)-2'-deoxyribonucleotide-DNA = a 3'-end 2'-deoxyribonucleotide-(2,3-dehydro-2,3-deoxyribose 5'-phosphate)-DNA + a 5'-end 5'-phospho-2'-deoxyribonucleoside-DNA + H(+). Component of the small ribosomal subunit. The ribosome is a large ribonucleoprotein complex responsible for the synthesis of proteins in the cell. Has endonuclease activity and plays a role in repair of damaged DNA. Also involved in other processes including regulation of transcription, translation of its cognate mRNA, spindle formation and chromosome movement during mitosis, and apoptosis. This chain is Small ribosomal subunit protein uS3A (rps3-a), found in Xenopus laevis (African clawed frog).